The following is a 661-amino-acid chain: Potassium voltage-gated channel subfamily KQT member 1 (661 aa).

2 disordered regions span residues 1–29 and 42–88; these read MAAA…ESAG and ESGP…SLDP. Over 1–119 the chain is Cytoplasmic; it reads MAAASTPPRA…YNFLERPTGW (119 aa). At Ser-27 the chain carries Phosphoserine; by PKA. Pro residues predominate over residues 54-85; the sequence is VSPPSAPEPAPPASPASPAPPAADQGPQPPVS. Residues 120 to 141 form a helical membrane-spanning segment; sequence KCFAYHFTVFLIVLVCLIFSVL. Residues 142–152 are Extracellular-facing; that stretch reads STIEQYATLAT. The chain crosses the membrane as a helical span at residues 153 to 175; sequence GTLFWMEIVLVVFFGTEYVVRLW. Residues 176–191 lie on the Cytoplasmic side of the membrane; it reads SAGCRSKYVGLWGRLR. The chain crosses the membrane as a helical span at residues 192-217; the sequence is FARKPISIIDLIVVVASMVVLCVGSK. The Extracellular segment spans residues 218–225; it reads GQVFATSA. A helical; Voltage-sensor transmembrane segment spans residues 226-241; it reads IRGIRFLQILRMLHVD. The tract at residues 237-245 is interaction with KCNE3; it reads MLHVDRQGG. Residues 242–259 lie on the Cytoplasmic side of the membrane; sequence RQGGTWRLLGSVVFIHRQ. Position 243 (Gln-243) interacts with a 1,2-diacyl-sn-glycero-3-phospho-(1D-myo-inositol-4,5-bisphosphate). A helical membrane pass occupies residues 260–282; it reads ELITTLYIGFLGLIFSSYFVYLA. At 283-298 the chain is on the extracellular side; sequence EKDAVNESGRVEFGSY. An N-linked (GlcNAc...) asparagine glycan is attached at Asn-288. The pore-forming intramembrane region spans 299–319; it reads ADALWWGVVTVTTIGYGDKVP. Over 320–321 the chain is Extracellular; it reads QT. A helical membrane pass occupies residues 322-347; that stretch reads WVGKTIASCFSVFAISFFALPAGILG. Topologically, residues 348–661 are cytoplasmic; that stretch reads SGFALKVQQK…VPRRDPEEGS (314 aa). Residues 369–381 are interaction with CALM; that stretch reads AAASLIQTAWRCY. 2 positions are modified to phosphoserine: Ser-406 and Ser-408. Positions 514 to 528 are interaction with CALM; calcium-dependent; sequence KVIRRMQYFVAKKKF. The segment at 534–571 is interaction with KCNE1 C-terminus; sequence PYDVRDVIEQYSQGHLNLMVRIKELQRRLDQSIGKPSL. The stretch at 584-620 forms a coiled coil; the sequence is SNSIGARLNRVEDKVTQLDQRLVLIADMLQQLLALHQ. Residues 587-615 form an interaction with AKAP9 region; it reads IGARLNRVEDKVTQLDQRLVLIADMLQQL. Positions 588 to 619 are C-terminal assembly domain (tetramerization); the sequence is GARLNRVEDKVTQLDQRLVLIADMLQQLLALH. The disordered stretch occupies residues 624 to 661; the sequence is HGGAHPAQARDGDPADPELFLPTYEQLTVPRRDPEEGS.

The protein belongs to the potassium channel family. KQT (TC 1.A.1.15) subfamily. Kv7.1/KCNQ1 sub-subfamily. In terms of assembly, tetramer. Heterotetramer with KCNE1; targets to the membrane raft. Interacts (via C-terminus) with CALM; forms a heterooctameric structure (with 4:4 KCNQ1:CALM stoichiometry) in a calcium-independent manner. Interacts with AKAP9; targets protein kinase A (PKA) catalytic and regulatory subunits and protein phosphatase 1 (PP1) to the KCNQ1-KCNE1 complex, allowing PKA-mediated phosphorylation and increase of delayed rectifier potassium channel activity. Interacts with KCNE2; form a heterooligomer complex that targets to the membrane raft and leading to currents with an apparently instantaneous activation, a rapid deactivation process and a linear current-voltage relationship and decreases the amplitude of the outward current. Interacts with AP2M1; mediates estrogen-induced internalization via clathrin-coated vesicles. Interacts with NEDD4L; promotes internalization and decreases I(Ks) currents. Interacts with USP2; counteracts the NEDD4L-specific down-regulation of I(Ks) and restore plasma membrane localization. Heterotetramer with KCNQ5; has a voltage-gated potassium channel activity. Interacts with KCNE3; four KCNE3 molecules are bound to one KCNQ1 tetramer (4:4 KCNQ1:KCNE3 stoichiometry); alters membrane raft localization; affects KCNQ1 structure and gating properties. Interacts with KCNE4; impairs KCNQ1 localization in lipid rafts and inhibits voltage-gated potassium channel activity. Interacts with KCNE5; impairs KCNQ1 localization in lipid rafts and only conducts current upon strong and continued depolarization. Interacts with SLC5A3; forms coregulatory channel-transporter complexes that modulate Na(+)-coupled myo-inositol influx through the transporter. Post-translationally, phosphorylation at Ser-27 by PKA; increases delayed rectifier potassium channel activity of the KCNQ1-KCNE1 complex through a macromolecular complex that includes PKA, PP1, and the targeting protein AKAP9. Ubiquitinated by NEDD4L; promotes internalization. The ubiquitinylated form is internalized through a clathrin-mediated endocytosis by interacting with AP2M1 and is recycled back to the cell membrane via RAB4A and RAB11A. In terms of processing, deubiquitinated by USP2; counteracts the NEDD4L-specific down-regulation of I(Ks) and restores the membrane localization.

It localises to the cell membrane. The protein resides in the cytoplasmic vesicle membrane. The protein localises to the early endosome. Its subcellular location is the membrane raft. It is found in the endoplasmic reticulum. It localises to the basolateral cell membrane. The protein resides in the apical cell membrane. It catalyses the reaction K(+)(in) = K(+)(out). With respect to regulation, PIP2 molecule is essential to activate KCNQ channels by inducing the coupling of the voltage-sensing domain (VSD) and the pore-forming domain (PD). Upon channel activation, PIP2 disrupts the VSD-calmodulin/CALM interactions, causing the release of CALM from the VSD which triggers the opening of the gate. Calcium potentiates KCNQ1 channel current through calcium-bound CALM. Calcium-bound CALM competes with PIP2 to stabilize the channel open state. Pore-forming subunit of the voltage-gated potassium (Kv) channel involved in the regulation of cardiomyocyte excitability and important in normal development and functions of myocardium, inner ear, stomach and colon. Associates with KCNE beta subunits that modulates current kinetics. Induces a voltage-dependent by rapidly activating and slowly deactivating potassium-selective outward current. Also promotes a delayed voltage activated potassium current showing outward rectification characteristic. During beta-adrenergic receptor stimulation participates in cardiac repolarization by associating with KCNE1 to form the I(Ks) cardiac potassium current that increases the amplitude and slows down the activation kinetics of outward potassium current I(Ks). Muscarinic agonist oxotremorine-M strongly suppresses KCNQ1/KCNE1 current. When associated with KCNE3, forms the potassium channel that is important for cyclic AMP-stimulated intestinal secretion of chloride ions. This interaction with KCNE3 is reduced by 17beta-estradiol, resulting in the reduction of currents. During conditions of increased substrate load, maintains the driving force for proximal tubular and intestinal sodium ions absorption, gastric acid secretion, and cAMP-induced jejunal chloride ions secretion. Allows the provision of potassium ions to the luminal membrane of the secretory canaliculus in the resting state as well as during stimulated acid secretion. When associated with KCNE2, forms a heterooligomer complex leading to currents with an apparently instantaneous activation, a rapid deactivation process and a linear current-voltage relationship and decreases the amplitude of the outward current. When associated with KCNE4, inhibits voltage-gated potassium channel activity. When associated with KCNE5, this complex only conducts current upon strong and continued depolarization. Also forms a heterotetramer with KCNQ5 that has a voltage-gated potassium channel activity. Binds with phosphatidylinositol 4,5-bisphosphate. KCNQ1-KCNE2 channel associates with Na(+)-coupled myo-inositol symporter in the apical membrane of choroid plexus epithelium and regulates the myo-inositol gradient between blood and cerebrospinal fluid with an impact on neuron excitability. The sequence is that of Potassium voltage-gated channel subfamily KQT member 1 from Oryctolagus cuniculus (Rabbit).